Reading from the N-terminus, the 250-residue chain is Phosphoribosylaminoimidazole-succinocarboxamide synthase (250 aa).

The protein belongs to the SAICAR synthetase family.

It carries out the reaction 5-amino-1-(5-phospho-D-ribosyl)imidazole-4-carboxylate + L-aspartate + ATP = (2S)-2-[5-amino-1-(5-phospho-beta-D-ribosyl)imidazole-4-carboxamido]succinate + ADP + phosphate + 2 H(+). Its pathway is purine metabolism; IMP biosynthesis via de novo pathway; 5-amino-1-(5-phospho-D-ribosyl)imidazole-4-carboxamide from 5-amino-1-(5-phospho-D-ribosyl)imidazole-4-carboxylate: step 1/2. The protein is Phosphoribosylaminoimidazole-succinocarboxamide synthase of Parasynechococcus marenigrum (strain WH8102).